Reading from the N-terminus, the 141-residue chain is Large ribosomal subunit protein uL22c (141 aa).

The protein belongs to the universal ribosomal protein uL22 family. As to quaternary structure, part of the 50S ribosomal subunit.

It localises to the plastid. It is found in the chloroplast. This protein binds specifically to 23S rRNA. In terms of biological role, the globular domain of the protein is located near the polypeptide exit tunnel on the outside of the subunit, while an extended beta-hairpin is found that lines the wall of the exit tunnel in the center of the 70S ribosome. This is Large ribosomal subunit protein uL22c (rpl22) from Chloranthus spicatus (Chulantree).